The primary structure comprises 350 residues: Hepatocyte nuclear factor 3-gamma (350 aa).

The segment at residues 116 to 207 (AKPPYSYISL…GNMFENGCYL (92 aa)) is a DNA-binding region (fork-head). Positions 217 to 276 (EKVKKGGSGAATTTRNGTGSAASTTTPAATVTSPPQPPPPAPEPEAQGGEDVGALDCGSP) are disordered. A compositionally biased stretch (low complexity) spans 226–249 (AATTTRNGTGSAASTTTPAATVTS). Positions 250–259 (PPQPPPPAPE) are enriched in pro residues.

As to quaternary structure, interacts with FOXA2. As to expression, expressed in erythroleukemia and hepatoma cell lines and in liver and pancreas. Not expressed in any other cell lines or tissues examined.

The protein localises to the nucleus. Functionally, transcription factor that is thought to act as a 'pioneer' factor opening the compacted chromatin for other proteins through interactions with nucleosomal core histones and thereby replacing linker histones at target enhancer and/or promoter sites. Originally described as a transcription activator for a number of liver genes such as AFP, albumin, tyrosine aminotransferase, PEPCK, etc. Interacts with the cis-acting regulatory regions of these genes. Involved in glucose homeostasis; binds to and activates transcription from the G6PC1 promoter. Binds to the CYP3A4 promoter and activates its transcription in cooperation with CEBPA. Binds to the CYP3A7 promoter together with members of the CTF/NF-I family. Involved in regulation of neuronal-specific transcription. May be involved in regulation of spermatogenesis. The polypeptide is Hepatocyte nuclear factor 3-gamma (FOXA3) (Homo sapiens (Human)).